We begin with the raw amino-acid sequence, 100 residues long: MDLTPREKDKMLIFTAGLVAERRLARGVKLNYPEAMAYISAALLEGARDGQTVADLMHYGTTLLTRDQVMEGIPEMIPEIQVEATFPDGTKLVTVHQPIA.

Belongs to the urease gamma subunit family. As to quaternary structure, heterotrimer of UreA (gamma), UreB (beta) and UreC (alpha) subunits. Three heterotrimers associate to form the active enzyme.

It is found in the cytoplasm. It carries out the reaction urea + 2 H2O + H(+) = hydrogencarbonate + 2 NH4(+). It participates in nitrogen metabolism; urea degradation; CO(2) and NH(3) from urea (urease route): step 1/1. The polypeptide is Urease subunit gamma (Pseudomonas syringae pv. tomato (strain ATCC BAA-871 / DC3000)).